The chain runs to 480 residues: ATP synthase subunit beta, chloroplastic (480 aa).

G161–T168 serves as a coordination point for ATP.

The protein belongs to the ATPase alpha/beta chains family. F-type ATPases have 2 components, CF(1) - the catalytic core - and CF(0) - the membrane proton channel. CF(1) has five subunits: alpha(3), beta(3), gamma(1), delta(1), epsilon(1). CF(0) has four main subunits: a(1), b(1), b'(1) and c(9-12).

The protein localises to the plastid. It is found in the chloroplast thylakoid membrane. It catalyses the reaction ATP + H2O + 4 H(+)(in) = ADP + phosphate + 5 H(+)(out). Its function is as follows. Produces ATP from ADP in the presence of a proton gradient across the membrane. The catalytic sites are hosted primarily by the beta subunits. This is ATP synthase subunit beta, chloroplastic from Euglena gracilis.